The sequence spans 209 residues: MSKKGLLIVISGPSGAGKGTICKALMKEQQFWLSVSATTREPREKEVEGKSYYFLTVDEFKSKISEDGFLEYAEVYGNYYGTPKKSVCEKIDNGENVILEIDIQGALKVKENYPEGVFIFILPPSMEELKKRIIGRGSETEKSLMTRFKSAYKEINYVSKYNYAIINDTVENAVTKINSIIVAEKCRVDRIKDNIIDSKEGKIHEQFYD.

The 178-residue stretch at 5 to 182 (GLLIVISGPS…AVTKINSIIV (178 aa)) folds into the Guanylate kinase-like domain. An ATP-binding site is contributed by 12–19 (GPSGAGKG).

This sequence belongs to the guanylate kinase family.

Its subcellular location is the cytoplasm. The enzyme catalyses GMP + ATP = GDP + ADP. Essential for recycling GMP and indirectly, cGMP. The chain is Guanylate kinase from Clostridium acetobutylicum (strain ATCC 824 / DSM 792 / JCM 1419 / IAM 19013 / LMG 5710 / NBRC 13948 / NRRL B-527 / VKM B-1787 / 2291 / W).